A 710-amino-acid chain; its full sequence is Conserved oligomeric Golgi complex subunit 2 (710 aa).

This sequence belongs to the COG2 family. Component of the conserved oligomeric Golgi complex which is composed of eight different subunits and is required for normal Golgi morphology and localization.

The protein resides in the golgi apparatus membrane. Functionally, required for normal Golgi morphology and function. This Drosophila melanogaster (Fruit fly) protein is Conserved oligomeric Golgi complex subunit 2.